The primary structure comprises 525 residues: GMP synthase [glutamine-hydrolyzing] (525 aa).

The 200-residue stretch at 8 to 207 (KILILDFGSQ…ALDICGCAAN (200 aa)) folds into the Glutamine amidotransferase type-1 domain. Catalysis depends on cysteine 85, which acts as the Nucleophile. Catalysis depends on residues histidine 181 and glutamate 183. A GMPS ATP-PPase domain is found at 208–400 (WKPSSIIEDA…LGLPYNMLYR (193 aa)). 235-241 (SGGVDSS) is an ATP binding site.

As to quaternary structure, homodimer.

It carries out the reaction XMP + L-glutamine + ATP + H2O = GMP + L-glutamate + AMP + diphosphate + 2 H(+). It functions in the pathway purine metabolism; GMP biosynthesis; GMP from XMP (L-Gln route): step 1/1. Functionally, catalyzes the synthesis of GMP from XMP. This Shewanella oneidensis (strain ATCC 700550 / JCM 31522 / CIP 106686 / LMG 19005 / NCIMB 14063 / MR-1) protein is GMP synthase [glutamine-hydrolyzing].